Consider the following 372-residue polypeptide: Partitioning defective 6 homolog beta (372 aa).

S11 carries the phosphoserine modification. One can recognise a PB1 domain in the interval T16–K96. Residues R126–N253 are interaction with PARD3 and CDC42. A Pseudo-CRIB domain is found at I133–I150. Residues R157–N250 form the PDZ domain. A compositionally biased stretch (polar residues) spans N253–S272. Positions N253–E292 are disordered.

This sequence belongs to the PAR6 family. In terms of assembly, interacts with PARD3. Interacts with GTP-bound forms of CDC42 and RAC1. Interacts with GTP-bound RHOQ/TC10. Interacts with PALS1. Interacts with the N-terminal part of PRKCI and PRKCZ. Part of a complex with PARD3, CDC42 or RAC1 and PRKCI or PRKCZ. Part of a complex with LLGL1 and PRKCI. Interacts with PARD3B. Interacts with ECT2. Expressed in pancreas and in both adult and fetal kidney. Weakly expressed in placenta and lung. Not expressed in other tissues.

The protein resides in the cytoplasm. It localises to the cell membrane. The protein localises to the cell junction. Its subcellular location is the tight junction. Functionally, adapter protein involved in asymmetrical cell division and cell polarization processes. Probably involved in formation of epithelial tight junctions. Association with PARD3 may prevent the interaction of PARD3 with F11R/JAM1, thereby preventing tight junction assembly. The PARD6-PARD3 complex links GTP-bound Rho small GTPases to atypical protein kinase C proteins. This is Partitioning defective 6 homolog beta (PARD6B) from Homo sapiens (Human).